A 141-amino-acid polypeptide reads, in one-letter code: Large ribosomal subunit protein uL11 (141 aa).

This sequence belongs to the universal ribosomal protein uL11 family. Part of the ribosomal stalk of the 50S ribosomal subunit. Interacts with L10 and the large rRNA to form the base of the stalk. L10 forms an elongated spine to which L12 dimers bind in a sequential fashion forming a multimeric L10(L12)X complex. In terms of processing, one or more lysine residues are methylated.

Functionally, forms part of the ribosomal stalk which helps the ribosome interact with GTP-bound translation factors. The polypeptide is Large ribosomal subunit protein uL11 (Shouchella clausii (strain KSM-K16) (Alkalihalobacillus clausii)).